Here is a 199-residue protein sequence, read N- to C-terminus: Large ribosomal subunit protein bL25 (199 aa).

It belongs to the bacterial ribosomal protein bL25 family. CTC subfamily. As to quaternary structure, part of the 50S ribosomal subunit; part of the 5S rRNA/L5/L18/L25 subcomplex. Contacts the 5S rRNA. Binds to the 5S rRNA independently of L5 and L18.

This is one of the proteins that binds to the 5S RNA in the ribosome where it forms part of the central protuberance. The polypeptide is Large ribosomal subunit protein bL25 (Pelodictyon phaeoclathratiforme (strain DSM 5477 / BU-1)).